Reading from the N-terminus, the 451-residue chain is Endosomal transmembrane epsin interactor 1 (451 aa).

The N-terminal stretch at Met-1–Gly-29 is a signal peptide. Residues Ala-30–Lys-85 are Lumenal-facing. A helical membrane pass occupies residues Val-86–Ala-106. At Leu-107 to Leu-451 the chain is on the cytoplasmic side. A mediates interaction with EPN1 region spans residues Leu-107–Leu-451. 2 consecutive short sequence motifs (PPxY; mediates interaction with ITCH) follow at residues Pro-148–Tyr-151 and Pro-194–Tyr-197. Positions Thr-204–Gln-213 are enriched in polar residues. The tract at residues Thr-204 to Pro-224 is disordered. Lys-274 participates in a covalent cross-link: Glycyl lysine isopeptide (Lys-Gly) (interchain with G-Cter in ubiquitin). Phosphoserine is present on Ser-275. Lys-365 is covalently cross-linked (Glycyl lysine isopeptide (Lys-Gly) (interchain with G-Cter in ubiquitin)).

It belongs to the ENTREP family. Interacts with ITCH; enhances the ubiquitination of CXCR4 by ITCH and the subsequent endocytosis and desensitization of the receptor. Interacts with EPN1.

It localises to the early endosome membrane. The protein localises to the late endosome membrane. It is found in the recycling endosome membrane. The protein resides in the cell membrane. In terms of biological role, functions as an activator of the E3 ubiquitin protein ligase ITCH in the ubiquitination of the CXCL12-activated CXCR4 receptor. Thereby, triggers CXCR4 endocytosis and desensitization, negatively regulating the CXCL12/CXCR4 signaling pathway. The chain is Endosomal transmembrane epsin interactor 1 from Mus musculus (Mouse).